A 113-amino-acid chain; its full sequence is Endoribonuclease SymE (113 aa).

Residues 29–74 enclose the SpoVT-AbrB domain; sequence SRYPDYSRIPAITLKGQWLEAAGFATGTVVDVKVMEGCIVLTAQPP.

It belongs to the SymE family.

It localises to the cytoplasm. Involved in the degradation and recycling of damaged RNA. It is itself a target for degradation by the ATP-dependent protease Lon. The polypeptide is Endoribonuclease SymE (Escherichia coli (strain 55989 / EAEC)).